Reading from the N-terminus, the 178-residue chain is Large ribosomal subunit protein uL6 (178 aa).

It belongs to the universal ribosomal protein uL6 family. Part of the 50S ribosomal subunit.

In terms of biological role, this protein binds to the 23S rRNA, and is important in its secondary structure. It is located near the subunit interface in the base of the L7/L12 stalk, and near the tRNA binding site of the peptidyltransferase center. The sequence is that of Large ribosomal subunit protein uL6 from Lactiplantibacillus plantarum (strain ATCC BAA-793 / NCIMB 8826 / WCFS1) (Lactobacillus plantarum).